A 428-amino-acid polypeptide reads, in one-letter code: D-amino acid dehydrogenase (428 aa).

Residue 3 to 17 participates in FAD binding; the sequence is VVILGSGVVGVASAY.

The protein belongs to the DadA oxidoreductase family. It depends on FAD as a cofactor.

The enzyme catalyses a D-alpha-amino acid + A + H2O = a 2-oxocarboxylate + AH2 + NH4(+). It functions in the pathway amino-acid degradation; D-alanine degradation; NH(3) and pyruvate from D-alanine: step 1/1. Functionally, oxidative deamination of D-amino acids. The polypeptide is D-amino acid dehydrogenase (Burkholderia pseudomallei (strain K96243)).